A 228-amino-acid chain; its full sequence is ATP synthase F(0) complex subunit a (228 aa).

The next 5 membrane-spanning stretches (helical) occupy residues Asn13–Met33, Trp69–Leu89, Gln98–Leu118, Ile139–Val159, and Ile194–Phe214.

This sequence belongs to the ATPase A chain family. Component of the ATP synthase complex composed at least of ATP5F1A/subunit alpha, ATP5F1B/subunit beta, ATP5MC1/subunit c (homooctomer), MT-ATP6/subunit a, MT-ATP8/subunit 8, ATP5ME/subunit e, ATP5MF/subunit f, ATP5MG/subunit g, ATP5MK/subunit k, ATP5MJ/subunit j, ATP5F1C/subunit gamma, ATP5F1D/subunit delta, ATP5F1E/subunit epsilon, ATP5PF/subunit F6, ATP5PB/subunit b, ATP5PD/subunit d, ATP5PO/subunit OSCP. ATP synthase complex consists of a soluble F(1) head domain (subunits alpha(3) and beta(3)) - the catalytic core - and a membrane F(0) domain - the membrane proton channel (subunits c, a, 8, e, f, g, k and j). These two domains are linked by a central stalk (subunits gamma, delta, and epsilon) rotating inside the F1 region and a stationary peripheral stalk (subunits F6, b, d, and OSCP). Interacts with DNAJC30; interaction is direct.

The protein localises to the mitochondrion inner membrane. It catalyses the reaction H(+)(in) = H(+)(out). Functionally, subunit a, of the mitochondrial membrane ATP synthase complex (F(1)F(0) ATP synthase or Complex V) that produces ATP from ADP in the presence of a proton gradient across the membrane which is generated by electron transport complexes of the respiratory chain. ATP synthase complex consist of a soluble F(1) head domain - the catalytic core - and a membrane F(1) domain - the membrane proton channel. These two domains are linked by a central stalk rotating inside the F(1) region and a stationary peripheral stalk. During catalysis, ATP synthesis in the catalytic domain of F(1) is coupled via a rotary mechanism of the central stalk subunits to proton translocation. With the subunit c (ATP5MC1), forms the proton-conducting channel in the F(0) domain, that contains two crucial half-channels (inlet and outlet) that facilitate proton movement from the mitochondrial intermembrane space (IMS) into the matrix. Protons are taken up via the inlet half-channel and released through the outlet half-channel, following a Grotthuss mechanism. The sequence is that of ATP synthase F(0) complex subunit a from Pelomedusa subrufa (African side-necked turtle).